The chain runs to 780 residues: Carboxysome assembly protein CsoS2 (780 aa).

Over residues 1–15 the composition is skewed to basic and acidic residues; the sequence is MARLSSRELALERRK. 5 disordered regions span residues 1 to 173, 189 to 212, 226 to 281, 330 to 349, and 382 to 444; these read MARL…RAIE, KHGKTAGKQPTSAAAVARQANPDL, TKAG…NRSV, NRVTGNEVGRSEKVTGDEPG, and SLTQ…TGVT. The stretch at 5 to 24 is one N-repeat 1 repeat; the sequence is SSRELALERRKALTTSGKKS. Low complexity predominate over residues 48–78; that stretch reads AAAAVEPTAPAVSAPVKPTVSFTPASPSSSS. An N-repeat 2 repeat occupies 86–105; that stretch reads PSRDLVLARRDALSRRGKTA. Basic and acidic residues predominate over residues 86-116; sequence PSRDLVLARRDALSRRGKTADTSRDRNRADV. Residues 117–130 are compositionally biased toward low complexity; that stretch reads ARQTQAAAPVAASA. 2 N-repeat repeats span residues 175-194 and 213-235; these read PSRALVLARREAMAKHGKTA and TSRELAQQVRELRTKAGARNKQS. M-repeat repeat units follow at residues 260–309, 320–369, 378–417, 431–480, 490–535, and 541–599; these read KVGE…QTFC, KVRV…AAYC, KVGHSLTQQGRPVSGVMVGRSSSVTGDEAGAGRSLTGDQY, KVGQ…NAFC, KVGF…LENA, and TSAV…ATAC. A middle region region spans residues 260–608; that stretch reads KVGESTTSTG…CGNEAPAGTD (349 aa). A compositionally biased stretch (low complexity) spans 264-276; that stretch reads STTSTGQTVTGTQ. Composition is skewed to low complexity over residues 387–403 and 432–444; these read GRPVSGVMVGRSSSVTG and VGQSGTLSGTGVT. Residues 609 to 749 form a C-terminal domain region; that stretch reads SHGQAPEGAA…ATVPHERKRN (141 aa). C-repeat repeat units lie at residues 623 to 669 and 693 to 726; these read SVMS…TEQF and EQPASRVTGEGSSTKITGDDWDRGEHVTGTEGVS. Disordered regions lie at residues 631 to 661 and 686 to 780; these read AQQQRDDQGAVTGTSYEQGNRITGPFDLAGG and AVVS…GARG. Residues 641–651 show a composition bias toward polar residues; that stretch reads VTGTSYEQGNR. The segment covering 709-720 has biased composition (basic and acidic residues); the sequence is TGDDWDRGEHVT. A C-terminal peptide region spans residues 750 to 780; the sequence is EENEWPVSRVTGSSGNTEKGSLITVSGGARG. The segment covering 759–768 has biased composition (polar residues); the sequence is VTGSSGNTEK.

The protein belongs to the CsoS2 family. Interacts via its N-terminal repeats with RuBisCO. Interacts with the major shell protein CsoS1. In terms of processing, unlike H.neapolitanus and predictions for P.marinus strain MIT 9313, this protein is not thought to have ribosomal frameshifting.

Its function is as follows. Required for alpha-carboxysome (Cb) assembly, mediates interaction between RuBisCO and the carboxysome shell. The protein is probably intrinsically disordered. The C-terminal repeats act as the encapsulation signal to target proteins to the Cb; they are necessary and sufficient to target both CsoS2 and foreign proteins to the Cb. The N-terminal repeats of this protein bind simultaneously to both subunits of RuBisCO. Probably also interacts with the major shell proteins (CsoS1); that interaction would increase the local concentration of CsoS2 so that it can condense RuBisCO and full carboxysomes can be formed. This chain is Carboxysome assembly protein CsoS2, found in Parasynechococcus marenigrum (strain WH8102).